The following is a 1196-amino-acid chain: Cingulin (1196 aa).

Residues 7-354 (MAEPRGPVDH…LVMTSGSAKG (348 aa)) are head. The short motif at 48-62 (ANTYGVAVRVQGIAG) is the ZIM element. Residues 54-67 (AVRVQGIAGQPFVV) are interaction with TJP1/ZO1. Positions 82-105 (IKGTNNRGPPGALSSDSELPESTY) are disordered. S95, S96, S98, S135, S137, S140, S155, S165, and S214 each carry phosphoserine. The segment covering 95 to 105 (SSDSELPESTY) has biased composition (polar residues). Residues 183–263 (NKFDSRQGGQ…NQGPLGGFSC (81 aa)) form a disordered region. The span at 218 to 231 (RLPRDTLDEREHQF) shows a compositional bias: basic and acidic residues. Positions 245 to 256 (MGNSKQSSQNQG) are enriched in polar residues. S274 bears the Phosphoserine mark. Positions 355 to 1150 (LTGQSELSQK…ARIKTLEKDS (796 aa)) form a coiled coil. At K576 the chain carries N6-acetyllysine. The span at 884–897 (AQRQAKEWATEAEK) shows a compositional bias: basic and acidic residues. Disordered regions lie at residues 884-906 (AQRQ…SRLQ), 1023-1061 (DLKS…EERE), and 1149-1174 (DSWR…EEFD). Low complexity predominate over residues 1038–1050 (SASLSQLESQNQE). Basic and acidic residues predominate over residues 1051–1061 (LQERLQAEERE). Residues 1155 to 1196 (SRSAAESAQREGLSSDEEFDSVYDPSSIASLLTESNLQTSSC) are tail. A phosphoserine mark is found at S1168, S1169, and S1175.

It belongs to the cingulin family. In terms of assembly, homodimer. Interacts with TJP1/ZO1 and SPEF1.

The protein localises to the cell junction. Its subcellular location is the tight junction. Probably plays a role in the formation and regulation of the tight junction (TJ) paracellular permeability barrier. The protein is Cingulin of Canis lupus familiaris (Dog).